Reading from the N-terminus, the 560-residue chain is Formate--tetrahydrofolate ligase (560 aa).

69 to 76 (TPAGEGKS) contributes to the ATP binding site.

It belongs to the formate--tetrahydrofolate ligase family.

The enzyme catalyses (6S)-5,6,7,8-tetrahydrofolate + formate + ATP = (6R)-10-formyltetrahydrofolate + ADP + phosphate. Its pathway is one-carbon metabolism; tetrahydrofolate interconversion. The protein is Formate--tetrahydrofolate ligase of Listeria monocytogenes serotype 4b (strain CLIP80459).